Consider the following 461-residue polypeptide: METLFNGTLALVGRDQESTGFAWWAGNARLINLSGKLLGAHVAHAGLIVFWAGAMNLFEVAHFVPEKPMYEQGLILLPHLATLGWGVGPGGEVLDTFPYFVSGVLHLISSAVLGFGGIYHALLGPETLEESFPFFGYVWKDRNKMTTILGIHLILLGIGAFLLVFKALYFGGVYDTWAPGGGDVRKISNLTLSPSILFGYLLKSPFGGEGWIVSVDDLEDIIGGHVWLGSICIFGGIWHILTKPFAWARRALVWSGEAYLSYSLAAISVFGFIACCFVWFNNTAYPSEFYGPTGPEASQAQAFTFLVRDQRLGANVGSAQGPTGLGKYLMRSPTGEVIFGGETMRFWDLRAPWLEPLRGPNGLDLSRLKKDIQPWQERRSAEYMTHAPLGSLNSVGGVATEINAVNYVSPRSWLATSHFVLGFFFFVGHLWHAGRARAAAAGFEKGIDRDFEPVLSMTPLN.

Positions 1–2 (ME) are excised as a propeptide. Thr-3 bears the N-acetylthreonine mark. Thr-3 carries the post-translational modification Phosphothreonine. 5 consecutive transmembrane segments (helical) span residues 57 to 81 (LFEV…PHLA), 122 to 143 (LLGP…KDRN), 166 to 188 (KALY…RKIS), 243 to 263 (KPFA…LSYS), and 279 to 300 (WFNN…ASQA). Residue Glu-355 participates in [CaMn4O5] cluster binding. The helical transmembrane segment at 435–459 (RARAAAAGFEKGIDRDFEPVLSMTP) threads the bilayer.

Belongs to the PsbB/PsbC family. PsbC subfamily. As to quaternary structure, PSII is composed of 1 copy each of membrane proteins PsbA, PsbB, PsbC, PsbD, PsbE, PsbF, PsbH, PsbI, PsbJ, PsbK, PsbL, PsbM, PsbT, PsbX, PsbY, PsbZ, Psb30/Ycf12, at least 3 peripheral proteins of the oxygen-evolving complex and a large number of cofactors. It forms dimeric complexes. It depends on Binds multiple chlorophylls and provides some of the ligands for the Ca-4Mn-5O cluster of the oxygen-evolving complex. It may also provide a ligand for a Cl- that is required for oxygen evolution. PSII binds additional chlorophylls, carotenoids and specific lipids. as a cofactor.

The protein resides in the plastid. It localises to the chloroplast thylakoid membrane. Its function is as follows. One of the components of the core complex of photosystem II (PSII). It binds chlorophyll and helps catalyze the primary light-induced photochemical processes of PSII. PSII is a light-driven water:plastoquinone oxidoreductase, using light energy to abstract electrons from H(2)O, generating O(2) and a proton gradient subsequently used for ATP formation. The chain is Photosystem II CP43 reaction center protein from Trachelium caeruleum (Blue throatwort).